We begin with the raw amino-acid sequence, 261 residues long: UPF0246 protein Rmet_0978 (261 aa).

This sequence belongs to the UPF0246 family.

The polypeptide is UPF0246 protein Rmet_0978 (Cupriavidus metallidurans (strain ATCC 43123 / DSM 2839 / NBRC 102507 / CH34) (Ralstonia metallidurans)).